Consider the following 268-residue polypeptide: Ribosomal RNA small subunit methyltransferase A (268 aa).

Residues N23, I25, G50, E72, D97, and N116 each coordinate S-adenosyl-L-methionine.

Belongs to the class I-like SAM-binding methyltransferase superfamily. rRNA adenine N(6)-methyltransferase family. RsmA subfamily.

It is found in the cytoplasm. It catalyses the reaction adenosine(1518)/adenosine(1519) in 16S rRNA + 4 S-adenosyl-L-methionine = N(6)-dimethyladenosine(1518)/N(6)-dimethyladenosine(1519) in 16S rRNA + 4 S-adenosyl-L-homocysteine + 4 H(+). Functionally, specifically dimethylates two adjacent adenosines (A1518 and A1519) in the loop of a conserved hairpin near the 3'-end of 16S rRNA in the 30S particle. May play a critical role in biogenesis of 30S subunits. The polypeptide is Ribosomal RNA small subunit methyltransferase A (Rickettsia bellii (strain RML369-C)).